Reading from the N-terminus, the 59-residue chain is Potassium channel toxin alpha-KTx 16.7 (59 aa).

The N-terminal stretch at 1-22 (MKILSILLIALVICSISICTEA) is a signal peptide. Intrachain disulfides connect cysteine 30–cysteine 51, cysteine 36–cysteine 56, and cysteine 40–cysteine 58.

It belongs to the short scorpion toxin superfamily. Potassium channel inhibitor family. Alpha-KTx 16 subfamily. Expressed by the venom gland.

Its subcellular location is the secreted. May play a role in blocking voltage-gated potassium channels Kv1.2/KCNA2, and Kv1.3/KCNA3. Blocks the voltage-gated potassium channel Kv1.3/KCNA3, with an IC(50) of 118.3 +-55.8 nM. In Mesobuthus gibbosus (Mediterranean checkered scorpion), this protein is Potassium channel toxin alpha-KTx 16.7.